Here is a 785-residue protein sequence, read N- to C-terminus: Pre-tRNA-processing protein PTA1 (785 aa).

The segment at 487–544 (INSVPSSSSSKRKSDDDDDGNDNEEVGNDGPTANSKKIKMETEPLAEEPEEPEDDDRM) is disordered. Serine 500 is subject to Phosphoserine. Composition is skewed to acidic residues over residues 502 to 513 (DDDDGNDNEEVG) and 530 to 542 (PLAEEPEEPEDDD).

As to quaternary structure, component of the cleavage and polyadenylation factor (CPF) complex, which is composed of PTI1, SYC1, SSU72, GLC7, MPE1, REF2, PFS2, PTA1, YSH1/BRR5, SWD2, CFT2/YDH1, YTH1, CFT1/YHH1, FIP1 and PAP1. Component of the APT complex, which is a subcomplex of CPF, and is composed of PTI1, SYC1, SSU72, GLC7, REF2, PTA1 and SWD2.

The protein localises to the nucleus. Its function is as follows. Essential in pre-tRNA processing. Component of the cleavage and polyadenylation factor (CPF) complex, which plays a key role in polyadenylation-dependent pre-mRNA 3'-end formation and cooperates with cleavage factors including the CFIA complex and NAB4/CFIB. Component of the APT complex, which may be involved in polyadenylation-independent transcript 3'-end formation. The protein is Pre-tRNA-processing protein PTA1 (PTA1) of Saccharomyces cerevisiae (strain ATCC 204508 / S288c) (Baker's yeast).